The following is an 81-amino-acid chain: Small ribosomal subunit protein bS16 (81 aa).

Belongs to the bacterial ribosomal protein bS16 family.

The protein is Small ribosomal subunit protein bS16 of Caldicellulosiruptor bescii (strain ATCC BAA-1888 / DSM 6725 / KCTC 15123 / Z-1320) (Anaerocellum thermophilum).